A 451-amino-acid polypeptide reads, in one-letter code: Chromosomal replication initiator protein DnaA (451 aa).

The domain I, interacts with DnaA modulators stretch occupies residues 1 to 93; sequence MENIDDLWNK…HNQEEEALPE (93 aa). The tract at residues 88–108 is disordered; sequence EEALPEQTPQTPPEKDVAGQS. The domain II stretch occupies residues 94–113; the sequence is QTPQTPPEKDVAGQSTLSQT. The domain III, AAA+ region stretch occupies residues 114–330; sequence MLNDKYTFNT…GALIRVVAYS (217 aa). Residues Gly158, Gly160, Lys161, and Thr162 each contribute to the ATP site. Residues 331 to 451 form a domain IV, binds dsDNA region; the sequence is SLINQDMNAD…VQAITEQLRQ (121 aa).

This sequence belongs to the DnaA family. Oligomerizes as a right-handed, spiral filament on DNA at oriC.

Its subcellular location is the cytoplasm. Its function is as follows. Plays an essential role in the initiation and regulation of chromosomal replication. ATP-DnaA binds to the origin of replication (oriC) to initiate formation of the DNA replication initiation complex once per cell cycle. Binds the DnaA box (a 9 base pair repeat at the origin) and separates the double-stranded (ds)DNA. Forms a right-handed helical filament on oriC DNA; dsDNA binds to the exterior of the filament while single-stranded (ss)DNA is stabiized in the filament's interior. The ATP-DnaA-oriC complex binds and stabilizes one strand of the AT-rich DNA unwinding element (DUE), permitting loading of DNA polymerase. After initiation quickly degrades to an ADP-DnaA complex that is not apt for DNA replication. Binds acidic phospholipids. In Shouchella clausii (strain KSM-K16) (Alkalihalobacillus clausii), this protein is Chromosomal replication initiator protein DnaA.